We begin with the raw amino-acid sequence, 285 residues long: SLAM family member 9 (285 aa).

The first 17 residues, 1-17 (MGALLWSLLLLLQEAKG), serve as a signal peptide directing secretion. Residues 18–232 (FSGDDEDPEE…YPEKPSMLCL (215 aa)) lie on the Extracellular side of the membrane. Positions 25–126 (PEEVIGVLQE…SHITKSYHLR (102 aa)) constitute an Ig-like V-type domain. 6 N-linked (GlcNAc...) asparagine glycosylation sites follow: asparagine 37, asparagine 97, asparagine 141, asparagine 149, asparagine 175, and asparagine 206. Positions 134-213 (PHITVNSNIS…VSNISSRRIS (80 aa)) constitute an Ig-like C2-type domain. A disulfide bridge links cysteine 154 with cysteine 198. The helical transmembrane segment at 233–253 (LVKSLFLLLLLAILTVGLCLF) threads the bilayer. Topologically, residues 254–285 (RAQKSYETPRVRKLKRNRIKLRKKGKSGPTPV) are cytoplasmic.

Its subcellular location is the membrane. In terms of biological role, may play a role in the immune response. In Mus musculus (Mouse), this protein is SLAM family member 9 (Slamf9).